Reading from the N-terminus, the 393-residue chain is NAD(P)H-quinone oxidoreductase subunit H, chloroplastic (393 aa).

The protein belongs to the complex I 49 kDa subunit family. NDH is composed of at least 16 different subunits, 5 of which are encoded in the nucleus.

It is found in the plastid. The protein resides in the chloroplast thylakoid membrane. It carries out the reaction a plastoquinone + NADH + (n+1) H(+)(in) = a plastoquinol + NAD(+) + n H(+)(out). The catalysed reaction is a plastoquinone + NADPH + (n+1) H(+)(in) = a plastoquinol + NADP(+) + n H(+)(out). In terms of biological role, NDH shuttles electrons from NAD(P)H:plastoquinone, via FMN and iron-sulfur (Fe-S) centers, to quinones in the photosynthetic chain and possibly in a chloroplast respiratory chain. The immediate electron acceptor for the enzyme in this species is believed to be plastoquinone. Couples the redox reaction to proton translocation, and thus conserves the redox energy in a proton gradient. This chain is NAD(P)H-quinone oxidoreductase subunit H, chloroplastic, found in Calycanthus floridus var. glaucus (Eastern sweetshrub).